The primary structure comprises 85 residues: Small ribosomal subunit protein bS18 (85 aa).

The protein belongs to the bacterial ribosomal protein bS18 family. In terms of assembly, part of the 30S ribosomal subunit. Forms a tight heterodimer with protein bS6.

Its function is as follows. Binds as a heterodimer with protein bS6 to the central domain of the 16S rRNA, where it helps stabilize the platform of the 30S subunit. In Helicobacter acinonychis (strain Sheeba), this protein is Small ribosomal subunit protein bS18.